Consider the following 395-residue polypeptide: uncharacterized protein (395 aa).

A run of 10 helical transmembrane segments spans residues 19-39 (IGIASLIGIVGGLSSVIIAII), 49-69 (VLLIPIVFFIAGLFVDYIYEL), 87-107 (LTWIRGLLKVLLAGAVIAVGG), 137-157 (LVIITGIAGGLGGAFSAPLGT), 172-192 (YINLIPPIIASVVGYLIFYLI), 206-226 (TINIHDFLLFILGAFFCSLIA), 252-272 (LIGGILVAVISYFIPEVMGMG), 279-299 (LFIMEFSLVFLVLLLIGKILA), 311-331 (GLVFPSMCIGAISGIIFGSLI), and 359-379 (VLCTEIFGFDFAVPASIGAVI).

The protein belongs to the chloride channel (TC 2.A.49) family.

It is found in the cell membrane. This is an uncharacterized protein from Methanocaldococcus jannaschii (strain ATCC 43067 / DSM 2661 / JAL-1 / JCM 10045 / NBRC 100440) (Methanococcus jannaschii).